The primary structure comprises 199 residues: Imidazoleglycerol-phosphate dehydratase (199 aa).

Belongs to the imidazoleglycerol-phosphate dehydratase family.

The protein localises to the cytoplasm. The catalysed reaction is D-erythro-1-(imidazol-4-yl)glycerol 3-phosphate = 3-(imidazol-4-yl)-2-oxopropyl phosphate + H2O. The protein operates within amino-acid biosynthesis; L-histidine biosynthesis; L-histidine from 5-phospho-alpha-D-ribose 1-diphosphate: step 6/9. The chain is Imidazoleglycerol-phosphate dehydratase from Mesorhizobium japonicum (strain LMG 29417 / CECT 9101 / MAFF 303099) (Mesorhizobium loti (strain MAFF 303099)).